A 46-amino-acid polypeptide reads, in one-letter code: Toxin Up-1 (46 aa).

It localises to the secreted. It is found in the nematocyst. The protein localises to the target cell membrane. Its function is as follows. This toxin is a potent hemolysin devoid of enzymatic activity. Its hemolytic activity is inhibited by sphingomyelin but not by cholesterol. In erythrocyte membranes, it causes numerous cell membrane ruptures. It also exerces cytotoxicity to different cell lines. It exerces a positive inotropic effect. Also causes hemorrhage and necrosis by dilation of the blood vessels in the skin, and vascular leakage of fluids and rupture of alveolar walls of the lungs. Is a potent ichtyotoxin. May act as a pore-forming toxin. This is Toxin Up-1 from Urticina piscivora (Fish-eating sea anemone).